Consider the following 547-residue polypeptide: Collagen EMF1-alpha (547 aa).

Disordered regions lie at residues 1–99 (GVPG…APGV) and 116–311 (GPDG…GGGI). The segment at 1 to 280 (GVPGPNGDVG…QGPRGGQGPK (280 aa)) is triple-helical region. 2 stretches are compositionally biased toward low complexity: residues 27-69 (QGPD…IRGQ) and 160-175 (QGSK…VGPQ). K187 carries the allysine modification. The span at 219-228 (VKGEKGEVGD) shows a compositional bias: basic and acidic residues. The span at 246-271 (DAGPAGPIGDAGIQGPPGQDGPTGAQ) shows a compositional bias: low complexity. The span at 272–281 (GPRGGQGPKG) shows a compositional bias: gly residues. The segment at 308 to 336 (GGGIILVPVNDQNPTRSPVSGSVFYRGQA) is telopeptide. Positions 337–547 (EETDVNLGSV…GFEMGPACFY (211 aa)) are cleaved as a propeptide — C-terminal propeptide. Residues 343 to 547 (LGSVADVIEL…GFEMGPACFY (205 aa)) enclose the Fibrillar collagen NC1 domain. N381 and N406 each carry an N-linked (GlcNAc...) asparagine glycan.

Belongs to the fibrillar collagen family.

Its subcellular location is the secreted. The protein resides in the extracellular space. It localises to the extracellular matrix. In Ephydatia muelleri (Mueller's freshwater sponge), this protein is Collagen EMF1-alpha (COLF1).